The chain runs to 146 residues: Histone H2A.1 (146 aa).

Position 1 is an N-acetylmethionine (methionine 1). The segment at 1–24 (MDATKTTKGAGGRKGGPRKKSVTK) is disordered. An SPKK motif motif is present at residues 142 to 145 (SPKK).

The protein belongs to the histone H2A family. In terms of assembly, the nucleosome is a histone octamer containing two molecules each of H2A, H2B, H3 and H4 assembled in one H3-H4 heterotetramer and two H2A-H2B heterodimers. The octamer wraps approximately 147 bp of DNA. High expression in meristematic tissues, in cells of the root pericycle and in shoot cortical cells undergoing endoduplication of their DNA.

The protein resides in the nucleus. It localises to the chromosome. Functionally, core component of nucleosome. Nucleosomes wrap and compact DNA into chromatin, limiting DNA accessibility to the cellular machineries which require DNA as a template. Histones thereby play a central role in transcription regulation, DNA repair, DNA replication and chromosomal stability. DNA accessibility is regulated via a complex set of post-translational modifications of histones, also called histone code, and nucleosome remodeling. This chain is Histone H2A.1, found in Solanum lycopersicum (Tomato).